We begin with the raw amino-acid sequence, 147 residues long: Myosin-2 essential light chain (147 aa).

EF-hand domains lie at 7-42 (DQLAEFQEAFNLFDNRGDGKIQLSQVGECLRALGQN), 80-115 (DTADDFIEGLRHFDKDASGYISSAELRHLLTTLGEK), and 115-147 (KLTDEEVEQLLANMEDQQGNINYEEFVRMVMSG). Position 30 is a phosphoserine (S30). 5 residues coordinate Ca(2+): D93, D95, S97, Y99, and E104.

In terms of assembly, myosin is a hexamer of 2 heavy chains and 4 light chains.

In Drosophila melanogaster (Fruit fly), this protein is Myosin-2 essential light chain (Mlc-c).